A 429-amino-acid polypeptide reads, in one-letter code: FAD-dependent monooxygenase azaH (429 aa).

Residues 5 to 25 (SIEVAIIGAGITGITLALGLL) traverse the membrane as a helical segment. Glu35 and Gly48 together coordinate FAD. N-linked (GlcNAc...) asparagine glycosylation is found at Asn75 and Asn87. Position 116 (Arg116) interacts with FAD. Residue Arg199 is part of the active site. Asp315 and Ala328 together coordinate FAD.

Belongs to the paxM FAD-dependent monooxygenase family. The cofactor is FAD.

The protein localises to the membrane. Its pathway is secondary metabolite biosynthesis. Functionally, FAD-dependent monooxygenase; part of the gene cluster that mediates the biosynthesis of azaphilones, a class of fungal metabolites characterized by a highly oxygenated pyrano-quinone bicyclic core and exhibiting a broad range of bioactivities. In the first step, the non-reducing polyketide synthase azaA forms the hexaketide precursor from successive condensations of five malonyl-CoA units, presumably with a simple acetyl-CoA starter unit. The reactive polyketide chain then undergoes a PT-mediated C2-C7 cyclization to afford the aromatic ring and is eventually released as an aldehyde through the R-domain. The putative ketoreductase azaE is proposed to catalyze the reduction of the terminal ketone resulting in the early culture product FK17-P2a. The monooxygenase azaH was demonstrated to be the only enzyme required to convert FK17-P2a to azanigerone E. AzaH first hydroxylates the benzaldehyde intermediate FK17-P2a at C4, which triggers the formation of the pyran-ring to afford azanigerone E. In parallel, the 2,4-dimethylhexanoyl chain is synthesized by the HR-PKS azaB and is proposed to be transferred to the C4-hydroxyl of azanigerone E by the acyltransferase azaD directly from the ACP domain of azaB. Alternatively, the 2,4-dimethyl-hexanoyl chain may be offloaded from the HR-PKS as a carboxylic acid and converted to an acyl-CoA by azaF. The resulting acyl-CoA molecule could then be taken up as a substrate by AzaD to form azanigerone B. To yield the carboxylic acid substituent in azanigerone A, the hydroxypropyl side chain of azanigerone B would need to undergo a C-C oxidative cleavage catalyzed by cytochrome P450 AzaI. AzaI is proposed to act on a vicinal diol that leads to a C-C bond scission either through an alkoxyradical intermediate or a peroxy complex. In the biosynthesis of azanigerone A, azanigerone B first undergoes hydroxylation at C10, possibly catalyzed by one of the two FAD-dependent monooxygenases encoded in the cluster, azaG or azaL, resulting in the vicinal diol azanigerone C. Oxidative cleavage of azanigerone C by azaI would yield the corresponding aldehyde derivative of azanigerone A. Finally, the dehydrogenase azaJ is proposed to convert the aldehyde functional group into the carboxylic acid, completing the conversion from azanigerone B to azanigerone A. Alternatively, the oxidation of aldehyde to carboxylic acid may be catalyzed by the same P450 enzyme azaI via consecutive oxidation or by endogenous alcohol dehydrogenase. This is FAD-dependent monooxygenase azaH from Aspergillus niger (strain ATCC 1015 / CBS 113.46 / FGSC A1144 / LSHB Ac4 / NCTC 3858a / NRRL 328 / USDA 3528.7).